A 594-amino-acid chain; its full sequence is Probable translation initiation factor IF-2 (594 aa).

Residues 3-220 form the tr-type G domain; the sequence is IRSPIVSVLG…MLMGLAQQYL (218 aa). The tract at residues 12-19 is G1; the sequence is GHVDHGKT. 12 to 19 contacts GTP; the sequence is GHVDHGKT. A G2 region spans residues 37-41; it reads GITQH. Positions 76 to 79 are G3; the sequence is DTPG. Residues 76 to 80 and 130 to 133 contribute to the GTP site; these read DTPGH and NKID. Residues 130 to 133 form a G4 region; that stretch reads NKID. The G5 stretch occupies residues 198 to 200; that stretch reads SAI.

Belongs to the TRAFAC class translation factor GTPase superfamily. Classic translation factor GTPase family. IF-2 subfamily.

Function in general translation initiation by promoting the binding of the formylmethionine-tRNA to ribosomes. Seems to function along with eIF-2. The chain is Probable translation initiation factor IF-2 (infB) from Methanothermobacter thermautotrophicus (strain ATCC 29096 / DSM 1053 / JCM 10044 / NBRC 100330 / Delta H) (Methanobacterium thermoautotrophicum).